A 670-amino-acid polypeptide reads, in one-letter code: UvrABC system protein B (670 aa).

The region spanning 26 to 183 is the Helicase ATP-binding domain; the sequence is EGLEDGLAHQ…RRLAELQYSR (158 aa). 39–46 provides a ligand contact to ATP; sequence GVTGSGKT. A Beta-hairpin motif is present at residues 92–115; sequence YYDYYQPEAYVPSSDTFIEKDASV. Positions 431–597 constitute a Helicase C-terminal domain; that stretch reads QVDDLLSEIR…GLNKKISDIL (167 aa). One can recognise a UVR domain in the interval 630–665; that stretch reads ELKIRELESKMLTHAQNLEFEEAAALRDELQALRAQ.

It belongs to the UvrB family. As to quaternary structure, forms a heterotetramer with UvrA during the search for lesions. Interacts with UvrC in an incision complex.

Its subcellular location is the cytoplasm. The UvrABC repair system catalyzes the recognition and processing of DNA lesions. A damage recognition complex composed of 2 UvrA and 2 UvrB subunits scans DNA for abnormalities. Upon binding of the UvrA(2)B(2) complex to a putative damaged site, the DNA wraps around one UvrB monomer. DNA wrap is dependent on ATP binding by UvrB and probably causes local melting of the DNA helix, facilitating insertion of UvrB beta-hairpin between the DNA strands. Then UvrB probes one DNA strand for the presence of a lesion. If a lesion is found the UvrA subunits dissociate and the UvrB-DNA preincision complex is formed. This complex is subsequently bound by UvrC and the second UvrB is released. If no lesion is found, the DNA wraps around the other UvrB subunit that will check the other stand for damage. The sequence is that of UvrABC system protein B from Pectobacterium carotovorum subsp. carotovorum (strain PC1).